We begin with the raw amino-acid sequence, 293 residues long: Bisanhydrobacterioruberin hydratase (293 aa).

The next 7 helical transmembrane spans lie at 36 to 56 (IAVVFPLVGAVTLLASAEGLL), 66 to 86 (FVLFGTFVMRLPLVAGIFPLV), 89 to 109 (RAGLALVALTLYSYGIELVGV), 134 to 154 (FGLPVFFFPLVLNAYLLVLLL), 171 to 191 (ATVMLVDLVLDPGAVAIGFWI), 199 to 219 (GVPWQNYAGWLLSGSVAVLLF), and 254 to 274 (LFYTNWVPFGLAALLGAGLLW).

Belongs to the BABR hydratase family.

The protein localises to the membrane. The catalysed reaction is bacterioruberin = bisanhydrobacterioruberin + 2 H2O. It participates in carotenoid biosynthesis. In terms of biological role, involved in the biosynthesis of the acyclic C50 carotenoid bacterioruberin (BR). Catalyzes the reaction that introduces hydroxyl groups to C3'' and C3''' of bisanhydrobacterioruberin (BABR) to generate BR. The protein is Bisanhydrobacterioruberin hydratase of Haloarcula japonica (strain ATCC 49778 / DSM 6131 / JCM 7785 / NBRC 101032 / NCIMB 13157 / TR-1).